We begin with the raw amino-acid sequence, 203 residues long: Probable metallo-hydrolase MJ0296 (203 aa).

Zn(2+)-binding residues include H86, H88, D90, H91, H135, D152, and H193.

This sequence belongs to the metallo-beta-lactamase superfamily. Zn(2+) serves as cofactor.

The protein is Probable metallo-hydrolase MJ0296 of Methanocaldococcus jannaschii (strain ATCC 43067 / DSM 2661 / JAL-1 / JCM 10045 / NBRC 100440) (Methanococcus jannaschii).